A 111-amino-acid polypeptide reads, in one-letter code: ETFEIPESVTMSPKQFEGYTPKKGDVTFNHASHMDIACQQCHHTVPDTYTIESCMTEGCHDNIKERTEISSVYRTFHTTKDSEKSCVGCHRELKRQGPSDAPLACNSCHVQ.

Heme c-binding residues include histidine 30, histidine 33, cysteine 38, cysteine 41, histidine 42, histidine 43, cysteine 54, cysteine 59, histidine 60, histidine 77, cysteine 86, cysteine 89, histidine 90, cysteine 105, cysteine 108, and histidine 109.

As to quaternary structure, homodimer. The cofactor is heme c.

Its subcellular location is the periplasm. Participates in sulfate respiration coupled with phosphorylation by transferring electrons from the enzyme dehydrogenase to ferredoxin. This is Cytochrome c3, 26 kDa from Desulfomicrobium norvegicum (strain DSM 1741 / NCIMB 8310) (Desulfovibrio baculatus (strain Norway 4)).